The chain runs to 951 residues: Valine--tRNA ligase (951 aa).

Residues 42–52 (PNVTGSLHMGH) carry the 'HIGH' region motif. Positions 554–558 (KMSKS) match the 'KMSKS' region motif. Residue K557 coordinates ATP. The stretch at 880-944 (AGLINKEDEL…AEAKAKLIEQ (65 aa)) forms a coiled coil.

This sequence belongs to the class-I aminoacyl-tRNA synthetase family. ValS type 1 subfamily. Monomer.

Its subcellular location is the cytoplasm. It carries out the reaction tRNA(Val) + L-valine + ATP = L-valyl-tRNA(Val) + AMP + diphosphate. Functionally, catalyzes the attachment of valine to tRNA(Val). As ValRS can inadvertently accommodate and process structurally similar amino acids such as threonine, to avoid such errors, it has a 'posttransfer' editing activity that hydrolyzes mischarged Thr-tRNA(Val) in a tRNA-dependent manner. The sequence is that of Valine--tRNA ligase (valS) from Escherichia coli (strain K12).